A 259-amino-acid chain; its full sequence is Isoepoxydon dehydrogenase patN (259 aa).

NADP(+)-binding residues include asparagine 96 and arginine 125. Residues serine 143 and serine 144 each act as proton donor in the active site. The NADP(+) site is built by tyrosine 158, lysine 162, and isoleucine 191. Tyrosine 158 (proton acceptor) is an active-site residue. The Lowers pKa of active site Tyr role is filled by lysine 162.

Belongs to the short-chain dehydrogenases/reductases (SDR) family.

The protein localises to the cytoplasm. The protein resides in the cytosol. It catalyses the reaction isoepoxydon + NADP(+) = phyllostine + NADPH + H(+). Its pathway is mycotoxin biosynthesis; patulin biosynthesis. Its function is as follows. Isoepoxydon dehydrogenase; part of the gene cluster that mediates the biosynthesis of patulin, an acetate-derived tetraketide mycotoxin produced by several fungal species that shows antimicrobial properties against several bacteria. PatN catalyzes the conversion of isoepoxydon into phyllostine. The pathway begins with the synthesis of 6-methylsalicylic acid by the polyketide synthase (PKS) patK via condensation of acetate and malonate units. The 6-methylsalicylic acid decarboxylase patG then catalyzes the decarboxylation of 6-methylsalicylic acid to yield m-cresol (also known as 3-methylphenol). These first reactions occur in the cytosol. The intermediate m-cresol is then transported into the endoplasmic reticulum where the cytochrome P450 monooxygenase patH converts it to m-hydroxybenzyl alcohol, which is further converted to gentisyl alcohol by the cytochrome P450 monooxygenase patI. The oxidoreductases patJ and patO further convert gentisyl alcohol to isoepoxydon in the vacuole. PatN catalyzes then the transformation of isoepoxydon into phyllostine. The cluster protein patF is responsible for the conversion from phyllostine to neopatulin whereas the alcohol dehydrogenase patD converts neopatulin to E-ascladiol. The steps between isoepoxydon and E-ascladiol occur in the cytosol, and E-ascladiol is probably secreted to the extracellular space by one of the cluster-specific transporters patC or patM. Finally, the secreted patulin synthase patE catalyzes the conversion of E-ascladiol to patulin. The protein is Isoepoxydon dehydrogenase patN of Aspergillus clavatus (strain ATCC 1007 / CBS 513.65 / DSM 816 / NCTC 3887 / NRRL 1 / QM 1276 / 107).